The chain runs to 648 residues: Indolepyruvate oxidoreductase subunit IorA (648 aa).

4Fe-4S ferredoxin-type domains are found at residues 585-614 and 616-645; these read PIYQ…WDPE and KKAK…KVRE. [4Fe-4S] cluster-binding residues include C594, C597, C600, C606, C625, C628, C631, and C635.

In terms of assembly, heterodimer of the IorA and IorB subunits. [4Fe-4S] cluster serves as cofactor.

It carries out the reaction indole-3-pyruvate + 2 oxidized [2Fe-2S]-[ferredoxin] + CoA = (indol-3-yl)acetyl-CoA + 2 reduced [2Fe-2S]-[ferredoxin] + CO2 + H(+). Functionally, catalyzes the ferredoxin-dependent oxidative decarboxylation of arylpyruvates. The sequence is that of Indolepyruvate oxidoreductase subunit IorA (iorA) from Pyrococcus abyssi (strain GE5 / Orsay).